A 679-amino-acid chain; its full sequence is Transketolase (679 aa).

Substrate is bound at residue His30. Thiamine diphosphate contacts are provided by residues His69 and 116 to 118 (GPL). Mg(2+) is bound at residue Asp157. Gly158 and Asn187 together coordinate thiamine diphosphate. Asn187 and Ile189 together coordinate Mg(2+). The substrate site is built by His262, Arg358, and Ser385. Position 262 (His262) interacts with thiamine diphosphate. 2 residues coordinate thiamine diphosphate: Glu417 and Phe444. Glu417 serves as the catalytic Proton donor. Substrate is bound by residues His468, Asp476, and Arg527.

Belongs to the transketolase family. Homodimer. Mg(2+) is required as a cofactor. Ca(2+) serves as cofactor. Requires Mn(2+) as cofactor. It depends on Co(2+) as a cofactor. The cofactor is thiamine diphosphate.

The catalysed reaction is D-sedoheptulose 7-phosphate + D-glyceraldehyde 3-phosphate = aldehydo-D-ribose 5-phosphate + D-xylulose 5-phosphate. In terms of biological role, catalyzes the transfer of a two-carbon ketol group from a ketose donor to an aldose acceptor, via a covalent intermediate with the cofactor thiamine pyrophosphate. This is Transketolase (TKL1) from Kluyveromyces lactis (strain ATCC 8585 / CBS 2359 / DSM 70799 / NBRC 1267 / NRRL Y-1140 / WM37) (Yeast).